A 387-amino-acid chain; its full sequence is 1-deoxy-D-xylulose 5-phosphate reductoisomerase (387 aa).

Positions 10, 11, 12, 13, 36, 37, and 124 each coordinate NADPH. Lys-125 is a binding site for 1-deoxy-D-xylulose 5-phosphate. Residue Glu-126 participates in NADPH binding. Asp-150 is a binding site for Mn(2+). Residues Ser-151, Glu-152, Ser-176, and His-199 each contribute to the 1-deoxy-D-xylulose 5-phosphate site. Mn(2+) is bound at residue Glu-152. Gly-205 provides a ligand contact to NADPH. 1-deoxy-D-xylulose 5-phosphate-binding residues include Ser-212, Asn-217, Lys-218, and Glu-221. Glu-221 is a Mn(2+) binding site.

Belongs to the DXR family. Mg(2+) is required as a cofactor. Mn(2+) serves as cofactor.

It carries out the reaction 2-C-methyl-D-erythritol 4-phosphate + NADP(+) = 1-deoxy-D-xylulose 5-phosphate + NADPH + H(+). It participates in isoprenoid biosynthesis; isopentenyl diphosphate biosynthesis via DXP pathway; isopentenyl diphosphate from 1-deoxy-D-xylulose 5-phosphate: step 1/6. Functionally, catalyzes the NADPH-dependent rearrangement and reduction of 1-deoxy-D-xylulose-5-phosphate (DXP) to 2-C-methyl-D-erythritol 4-phosphate (MEP). The polypeptide is 1-deoxy-D-xylulose 5-phosphate reductoisomerase (Cyanothece sp. (strain PCC 7425 / ATCC 29141)).